A 456-amino-acid polypeptide reads, in one-letter code: DnaJ homolog dnj-10 (456 aa).

The region spanning 44–108 (DYYKTLGVDK…TKRQEYDAYG (65 aa)) is the J domain. The CR-type zinc-finger motif lies at 178 to 257 (GATKNVSVNV…CEGEGQTVQR (80 aa)). 3 CXXCXGXG motif repeats span residues 208 to 215 (CPYCNGTG), 231 to 238 (CNRCRGSG), and 245 to 252 (CQECEGEG). Residues 395–429 (KGLEKNQKTEEKETKKNEEKKSEGASESQKRRSEP) show a composition bias toward basic and acidic residues. The interval 395–443 (KGLEKNQKTEEKETKKNEEKKSEGASESQKRRSEPVAENAETIDENQEN) is disordered.

The polypeptide is DnaJ homolog dnj-10 (dnj-10) (Caenorhabditis elegans).